Here is a 525-residue protein sequence, read N- to C-terminus: Adenosine deaminase AGSA (525 aa).

The N-terminal stretch at 1–25 (MSSFSTHNFVAIATFVCWFCCLATA) is a signal peptide. An N-linked (GlcNAc...) asparagine glycan is attached at Asn-81. The Zn(2+) site is built by His-117 and His-119. Asp-120 serves as a coordination point for substrate. Residue Asn-132 is glycosylated (N-linked (GlcNAc...) asparagine). Cys-142 and Cys-163 are disulfide-bonded. N-linked (GlcNAc...) asparagine glycosylation is present at Asn-188. Residues 207-214 (WVRFNKYF) and Gly-329 each bind substrate. Asn-334 carries N-linked (GlcNAc...) asparagine glycosylation. His-361 serves as a coordination point for Zn(2+). Residue Glu-364 is the Proton donor of the active site. The Proton acceptor role is filled by His-389. Asp-446 is a binding site for Zn(2+). Asp-447 contacts substrate.

Belongs to the metallo-dependent hydrolases superfamily. Adenosine and AMP deaminases family. ADGF subfamily. Requires Zn(2+) as cofactor. As to expression, detected in egg cordons and in the developing central nervous system. Not detected in adult central nervous system (at protein level). Atrial gland.

It is found in the secreted. It catalyses the reaction adenosine + H2O + H(+) = inosine + NH4(+). In terms of biological role, adenosine deaminase that may contribute to the degradation of extracellular adenosine, a signaling molecule that controls a variety of cellular responses. May play a role in the regulation of cell proliferation. This chain is Adenosine deaminase AGSA, found in Aplysia californica (California sea hare).